A 214-amino-acid polypeptide reads, in one-letter code: MSASETTPQSNHGIGILGGSFDPVHVGHLWMAESALEQLPIEHVRWIPAATSPLKPHGPVASNEHRLQMLRLALSGQSGLVIDDWELRQDSVSYTLLTLEYLQEQFPDRPLYLIIGADSLASFDRWREPEQILKRCHLAVIARGGDPPPDYSILDGMTDETQIQRIRESQIQMPQIEISSSDLRNRIATGRSIRFRVPHPVATLIDNEKMYRVR.

This sequence belongs to the NadD family.

The enzyme catalyses nicotinate beta-D-ribonucleotide + ATP + H(+) = deamido-NAD(+) + diphosphate. Its pathway is cofactor biosynthesis; NAD(+) biosynthesis; deamido-NAD(+) from nicotinate D-ribonucleotide: step 1/1. In terms of biological role, catalyzes the reversible adenylation of nicotinate mononucleotide (NaMN) to nicotinic acid adenine dinucleotide (NaAD). In Rhodopirellula baltica (strain DSM 10527 / NCIMB 13988 / SH1), this protein is Probable nicotinate-nucleotide adenylyltransferase.